Reading from the N-terminus, the 577-residue chain is Arginine--tRNA ligase (577 aa).

Positions 122 to 132 (PNVAKEMHVGH) match the 'HIGH' region motif.

It belongs to the class-I aminoacyl-tRNA synthetase family. As to quaternary structure, monomer.

It localises to the cytoplasm. It catalyses the reaction tRNA(Arg) + L-arginine + ATP = L-arginyl-tRNA(Arg) + AMP + diphosphate. The protein is Arginine--tRNA ligase of Aliivibrio fischeri (strain MJ11) (Vibrio fischeri).